The primary structure comprises 184 residues: UPF0215 protein MJ1150 (184 aa).

This sequence belongs to the UPF0215 family.

This chain is UPF0215 protein MJ1150, found in Methanocaldococcus jannaschii (strain ATCC 43067 / DSM 2661 / JAL-1 / JCM 10045 / NBRC 100440) (Methanococcus jannaschii).